Here is a 668-residue protein sequence, read N- to C-terminus: WD repeat-containing protein 48 homolog (668 aa).

8 WD repeats span residues 26 to 65 (QHRN…SEKY), 71 to 110 (HHND…CMST), 113 to 152 (THRD…ALTA), 164 to 203 (GSKD…RRMK), 206 to 245 (GHTE…CVQT), 248 to 287 (VHKE…NKTL), 290 to 329 (EEQA…RCTL), and 350 to 389 (KGGA…KKEQ). A disordered region spans residues 592 to 616 (ETTPSGGNANNSLQNSQSDANSEGS).

It belongs to the WD repeat WDR48 family. Catalytic component of the Usp12-46 deubiquitylase complex consisting of Usp12-46, Wdr20 and Uaf1; regulatory subunit that, together wtih Wdr20, stabilizes Usp12-46. The Usp12-46 deubiquitylase complex associates with arr/arrow; the interaction leads to deubiquitination and stabilization of arr/arrow.

Functionally, regulatory component of the Usp12-46 deubiquitylase complex. activates deubiquitination by increasing the catalytic turnover without increasing the affinity of deubiquitinating enzymes for the substrate. The complex deubiquitylates the wg/wingless-signaling receptor arr/arrow, which stabilizes the receptor and increases its concentration at the cell surface; this enhances the sensitivity of cells to wg/wingless-signal stimulation. This increases the amplitude and spatial range of the signaling response to the wg/wingless morphogen gradient, facilitating the precise concentration-dependent regulation of its target genes. Together with Wdr20 and Usp12-46 required for wg/wingless-mediated signaling in the wing imaginal disc and for wg/wingless-dependent regulation of intestinal stem cell proliferation. The chain is WD repeat-containing protein 48 homolog from Drosophila melanogaster (Fruit fly).